The sequence spans 377 residues: Nitric oxide reductase FlRd-NAD(+) reductase (377 aa).

It belongs to the FAD-dependent oxidoreductase family. FAD serves as cofactor.

The protein resides in the cytoplasm. The catalysed reaction is 2 reduced [nitric oxide reductase rubredoxin domain] + NAD(+) + H(+) = 2 oxidized [nitric oxide reductase rubredoxin domain] + NADH. It participates in nitrogen metabolism; nitric oxide reduction. Its function is as follows. One of at least two accessory proteins for anaerobic nitric oxide (NO) reductase. Reduces the rubredoxin moiety of NO reductase. In Escherichia fergusonii (strain ATCC 35469 / DSM 13698 / CCUG 18766 / IAM 14443 / JCM 21226 / LMG 7866 / NBRC 102419 / NCTC 12128 / CDC 0568-73), this protein is Nitric oxide reductase FlRd-NAD(+) reductase.